A 193-amino-acid polypeptide reads, in one-letter code: NADH-quinone oxidoreductase subunit B (193 aa).

Residues Cys-72, Cys-73, Cys-137, and Cys-167 each contribute to the [4Fe-4S] cluster site.

It belongs to the complex I 20 kDa subunit family. In terms of assembly, NDH-1 is composed of 14 different subunits. Subunits NuoB, C, D, E, F, and G constitute the peripheral sector of the complex. It depends on [4Fe-4S] cluster as a cofactor.

The protein localises to the cell inner membrane. The catalysed reaction is a quinone + NADH + 5 H(+)(in) = a quinol + NAD(+) + 4 H(+)(out). Its function is as follows. NDH-1 shuttles electrons from NADH, via FMN and iron-sulfur (Fe-S) centers, to quinones in the respiratory chain. The immediate electron acceptor for the enzyme in this species is believed to be ubiquinone. Couples the redox reaction to proton translocation (for every two electrons transferred, four hydrogen ions are translocated across the cytoplasmic membrane), and thus conserves the redox energy in a proton gradient. This is NADH-quinone oxidoreductase subunit B from Bradyrhizobium sp. (strain ORS 278).